The following is a 60-amino-acid chain: Large ribosomal subunit protein bL32 (60 aa).

The protein belongs to the bacterial ribosomal protein bL32 family.

This Streptococcus suis (strain 05ZYH33) protein is Large ribosomal subunit protein bL32.